Here is a 1751-residue protein sequence, read N- to C-terminus: Non-reducing polyketide synthase afvB (1751 aa).

Residues 19 to 249 (FRRLRLHSKC…PLPVYGGPCH (231 aa)) form an N-terminal acylcarrier protein transacylase domain (SAT) region. One can recognise a Ketosynthase family 3 (KS3) domain in the interval 381–811 (HEKIAVIGMS…GGNTSLLLEE (431 aa)). Catalysis depends on for beta-ketoacyl synthase activity residues Cys-554, His-689, and His-730. Positions 910 to 1228 (FVFSGQGSFS…SMSALHSAGV (319 aa)) are malonyl-CoA:ACP transacylase (MAT) domain. The tract at residues 1291-1607 (TALVHHILEE…PRILMSRFFD (317 aa)) is product template (PT) domain. Residues 1295–1429 (HHILEESFGK…GVVTCGDSHS (135 aa)) form an N-terminal hotdog fold region. One can recognise a PKS/mFAS DH domain in the interval 1295–1603 (HHILEESFGK…LRPLPRILMS (309 aa)). His-1327 acts as the Proton acceptor; for dehydratase activity in catalysis. Positions 1456 to 1603 (LASRVSKDLV…LRPLPRILMS (148 aa)) are C-terminal hotdog fold. The Proton donor; for dehydratase activity role is filled by Asp-1514. A disordered region spans residues 1610-1670 (DSQYGQMAQQ…KAPISGSWPN (61 aa)). Residues 1612–1657 (QYGQMAQQEPSTALPSTPQHTSSAKTTESTPSQQDESDNTSLATPE) are compositionally biased toward polar residues. In terms of domain architecture, Carrier spans 1670-1747 (NANSQLVRDA…DLKAYLEGNQ (78 aa)). The residue at position 1707 (Ser-1707) is an O-(pantetheine 4'-phosphoryl)serine.

It depends on pantetheine 4'-phosphate as a cofactor. In terms of tissue distribution, expressed mainly in sclerotia, with expression levels 20-fold and 10-fold greater than the expression levels of this gene found in mycelium and conidia, respectively.

Its pathway is secondary metabolite biosynthesis. Non-reducing polyketide synthase (NRPKS); part of the gene cluster that mediates the biosynthesis of aflavarin, a bicoumarin that exhibits anti-insectan activity against the fungivorous beetle C.hemipterus. Catalyzes the formation of the aromatic polyketide from acetyl coenzyme A and seven malonyl coenzyme A molecules. In Aspergillus flavus (strain ATCC 200026 / FGSC A1120 / IAM 13836 / NRRL 3357 / JCM 12722 / SRRC 167), this protein is Non-reducing polyketide synthase afvB.